A 173-amino-acid chain; its full sequence is Peptide methionine sulfoxide reductase MsrA (173 aa).

Cysteine 10 is an active-site residue.

Belongs to the MsrA Met sulfoxide reductase family.

The enzyme catalyses L-methionyl-[protein] + [thioredoxin]-disulfide + H2O = L-methionyl-(S)-S-oxide-[protein] + [thioredoxin]-dithiol. The catalysed reaction is [thioredoxin]-disulfide + L-methionine + H2O = L-methionine (S)-S-oxide + [thioredoxin]-dithiol. Functionally, has an important function as a repair enzyme for proteins that have been inactivated by oxidation. Catalyzes the reversible oxidation-reduction of methionine sulfoxide in proteins to methionine. This Acinetobacter baumannii (strain AB307-0294) protein is Peptide methionine sulfoxide reductase MsrA.